The primary structure comprises 172 residues: NADH-ubiquinone oxidoreductase chain 6 (172 aa).

The next 5 helical transmembrane spans lie at 1–21 (MTNY…GLAL), 26–48 (IYGG…GFGG), 52–74 (GLMV…TAMA), 86–106 (WFIF…FYLF), and 147–167 (CATW…FIII).

It belongs to the complex I subunit 6 family. In terms of assembly, core subunit of respiratory chain NADH dehydrogenase (Complex I) which is composed of 45 different subunits.

It localises to the mitochondrion inner membrane. The catalysed reaction is a ubiquinone + NADH + 5 H(+)(in) = a ubiquinol + NAD(+) + 4 H(+)(out). Core subunit of the mitochondrial membrane respiratory chain NADH dehydrogenase (Complex I) which catalyzes electron transfer from NADH through the respiratory chain, using ubiquinone as an electron acceptor. Essential for the catalytic activity and assembly of complex I. The polypeptide is NADH-ubiquinone oxidoreductase chain 6 (Rattus norvegicus (Rat)).